A 281-amino-acid polypeptide reads, in one-letter code: Inositol diphosphatase SIW14 (281 aa).

A disordered region spans residues 1-20; that stretch reads MGLYQAKNDEGSDPKSSSKI. The span at 7-20 shows a compositional bias: basic and acidic residues; the sequence is KNDEGSDPKSSSKI. S94 is subject to Phosphoserine. Residues 121-271 enclose the Tyrosine-protein phosphatase domain; that stretch reads NFSHVVGEIY…YDDDEIKRIA (151 aa). 1D-myo-inositol hexakisphosphate-binding residues include N189, I190, and H193. Catalysis depends on C214, which acts as the Phosphocysteine intermediate.

This sequence belongs to the protein-tyrosine phosphatase family. Atypical dual-specificity phosphatase Siw14-like subfamily. Monomer.

It is found in the cytoplasm. It catalyses the reaction 5-diphospho-1D-myo-inositol 1,2,3,4,6-pentakisphosphate + H2O = 1D-myo-inositol hexakisphosphate + phosphate + H(+). The enzyme catalyses 5-diphospho-1D-myo-inositol 1,3,4,6-tetrakisphosphate + H2O = 1D-myo-inositol 1,3,4,5,6-pentakisphosphate + phosphate + H(+). The catalysed reaction is 3,5-bis(diphospho)-1D-myo-inositol 1,2,4,6-tetrakisphosphate + H2O = 3-diphospho-1D-myo-inositol 1,2,4,5,6-pentakisphosphate + phosphate + 2 H(+). It carries out the reaction 1,5-bis(diphospho)-1D-myo-inositol 2,3,4,6-tetrakisphosphate + H2O = 1-diphospho-1D-myo-inositol 2,3,4,5,6-pentakisphosphate + phosphate + 2 H(+). It catalyses the reaction 6-diphospho-1D-myo-inositol pentakisphosphate + H2O = 1D-myo-inositol hexakisphosphate + phosphate + H(+). Selectively cleaves the beta-phosphate at the 5-position of soluble inositol pyrophosphates. Converts 5-diphosphoinositol tetrakisphosphate (5-PP-InsP(4)) into inositol pentakisphosphate (InsP(5)), 5-diphosphoinositol pentakisphosphate (5-PP-IP(5) or 5-InsP(7)) into inositol hexakisphosphate (IP(6) or InsP(6)), and 1,5-bisdiphosphoinositol tetrakisphosphate (1,5-PP-IP(5) or InsP(8)) into 1-diphosphoinositol pentakisphosphate (1-PP-IP(5) or 1-InsP(7)). Also has activity on 1,5-bis-diphosphoinositol 2,3,4,6-tetrakisphosphate (1,5-InsP(8)) and 3,5-InsP(8). Modulates inositol pyrophosphate metabolism that may have an influence in stress response. Plays a role in actin filament organization and endocytosis. Functions as a prion suppressing factor possibly due to its phosphatase activity against inositol pyrophosphates, which are signal transduction molecules involved in prion propagation. The polypeptide is Inositol diphosphatase SIW14 (SIW14) (Saccharomyces cerevisiae (strain ATCC 204508 / S288c) (Baker's yeast)).